Reading from the N-terminus, the 111-residue chain is MSQFEKQKEQGNSLFKQGLYREAVHCYDQLITAQPQNPVGYSNKAMALIKLGEYTQAIQMCQQGLRYTSTAEHVAIRSKLQYRLELAQGAVGSVQIPVVEVDELPEGYDRS.

S2 bears the N-acetylserine mark. 2 TPR repeats span residues 4–37 (FEKQ…QPQN) and 39–71 (VGYS…TSTA).

As to quaternary structure, component of the R2TP complex composed at least of RVB1, RVB2, TAH1 and PIH1. Also interacts with HSP90.

It localises to the cytoplasm. The protein localises to the nucleus. The polypeptide is TPR repeat-containing protein associated with Hsp90 (TAH1) (Saccharomyces cerevisiae (strain ATCC 204508 / S288c) (Baker's yeast)).